A 190-amino-acid polypeptide reads, in one-letter code: Elongation factor P 2 (190 aa).

It belongs to the elongation factor P family.

The protein resides in the cytoplasm. It functions in the pathway protein biosynthesis; polypeptide chain elongation. Involved in peptide bond synthesis. Stimulates efficient translation and peptide-bond synthesis on native or reconstituted 70S ribosomes in vitro. Probably functions indirectly by altering the affinity of the ribosome for aminoacyl-tRNA, thus increasing their reactivity as acceptors for peptidyl transferase. The sequence is that of Elongation factor P 2 (efp2) from Protochlamydia amoebophila (strain UWE25).